The following is a 238-amino-acid chain: Sarcospan (238 aa).

The disordered stretch occupies residues methionine 1–glutamine 33. Residues methionine 1 to proline 48 lie on the Extracellular side of the membrane. Positions arginine 8 to aspartate 20 are enriched in low complexity. Residues leucine 49 to methionine 69 traverse the membrane as a helical segment. Residues alanine 70–threonine 81 lie on the Cytoplasmic side of the membrane. Residues proline 82–valine 102 traverse the membrane as a helical segment. Residues serine 103–lysine 117 lie on the Cytoplasmic side of the membrane. A helical membrane pass occupies residues leucine 118–alanine 138. The Extracellular portion of the chain corresponds to alanine 139–valine 188. Residues phenylalanine 189–phenylalanine 209 form a helical membrane-spanning segment. Residues valine 210–valine 238 lie on the Cytoplasmic side of the membrane.

It is found in the cell membrane. The protein localises to the sarcolemma. The protein resides in the postsynaptic cell membrane. Component of the dystrophin-glycoprotein complex (DGC), a complex that spans the muscle plasma membrane and forms a link between the F-actin cytoskeleton and the extracellular matrix. Preferentially associates with the sarcoglycan subcomplex of the DGC. The protein is Sarcospan (SSPN) of Oryctolagus cuniculus (Rabbit).